The sequence spans 552 residues: Protein FAM234A (552 aa).

The Cytoplasmic segment spans residues methionine 1–threonine 48. The chain crosses the membrane as a helical; Signal-anchor for type II membrane protein span at residues alanine 49–isoleucine 69. The Extracellular portion of the chain corresponds to proline 70–alanine 552. Residues asparagine 115, asparagine 238, and asparagine 473 are each glycosylated (N-linked (GlcNAc...) asparagine).

It belongs to the FAM234 family.

It localises to the membrane. This Bos taurus (Bovine) protein is Protein FAM234A (FAM234A).